The chain runs to 476 residues: Protein transport protein Sec61 subunit alpha (476 aa).

At 2-33 the chain is on the cytoplasmic side; sequence GIKFLEVIKPFCAVLPEIQKPERKIQFREKVL. The helical transmembrane segment at 34-53 threads the bilayer; it reads WTAITLFIFLVCCQIPLFGI. At 54–76 the chain is on the lumenal side; that stretch reads MSSDSADPFYWMRVILASNRGTL. A helical membrane pass occupies residues 77-96; that stretch reads MELGISPIVTSDLIMQLLAG. Residues 97–117 lie on the Cytoplasmic side of the membrane; sequence AKIIEVGDSPKDRALFNGAQK. A helical transmembrane segment spans residues 118-138; sequence LFGMIITIGQAIVYVMTGMYG. Residues 139–144 are Lumenal-facing; it reads DPSEMG. Residues 145 to 165 traverse the membrane as a helical segment; it reads AGICLVIIIQLFVAGLIVLLL. Topologically, residues 166-172 are cytoplasmic; sequence DELLQKG. The helical transmembrane segment at 173–193 threads the bilayer; that stretch reads YGLGSGISLLIATNICETIVW. At 194-240 the chain is on the lumenal side; that stretch reads KAFSPTTVNTGRGTEFEGAIIALFHLLATRTDKVRALREAFYRQNLP. The chain crosses the membrane as a helical span at residues 241–261; sequence NLMNLIATVFVFAVVIYFQGF. Over 262-288 the chain is Cytoplasmic; the sequence is RVDLPIKSARYRGQYNTYPIKLFYTSN. The helical transmembrane segment at 289–309 threads the bilayer; the sequence is IPIILQSALVSNLYVISQMLS. Residues 310 to 354 are Lumenal-facing; that stretch reads TRFSGNFIVNLLGTWSDTSTGGPARAYPVGGLCYFLSPPESFGSV. A helical membrane pass occupies residues 355–375; the sequence is LDDPVHAAIYIVFMLGSCAFF. The Cytoplasmic portion of the chain corresponds to 376-420; the sequence is SKTWIEVSGSSAKDVAKQLKEQQMVMRGHRETSMVHELNRYIPTA. A helical membrane pass occupies residues 421-441; that stretch reads AAFGGLCIGGLSVMADFLGAI. Residues 442–445 lie on the Lumenal side of the membrane; it reads GSGT. Residues 446–462 form a helical membrane-spanning segment; the sequence is GILLAVTIIYQYFEIFV. Residues 463–476 lie on the Cytoplasmic side of the membrane; that stretch reads KEQSEMGSMGGLFF.

The protein belongs to the SecY/SEC61-alpha family. As to quaternary structure, the SEC61 channel-forming translocon complex consists of channel-forming core components SEC61A1, SEC61B and SEC61G and different auxiliary components such as SEC62 and SEC63. The SEC61 channel associates with the multi-pass translocon (MPT) complex.

It localises to the endoplasmic reticulum membrane. Its function is as follows. Component of SEC61 channel-forming translocon complex that mediates transport of signal peptide-containing precursor polypeptides across the endoplasmic reticulum (ER). Forms a ribosome receptor and a gated pore in the ER membrane, both functions required for cotranslational translocation of nascent polypeptides. May cooperate with auxiliary protein SEC62, SEC63 and HSPA5/BiP to enable post-translational transport of small presecretory proteins. The SEC61 channel is also involved in ER membrane insertion of transmembrane proteins: it mediates membrane insertion of the first few transmembrane segments of proteins, while insertion of subsequent transmembrane regions of multi-pass membrane proteins is mediated by the multi-pass translocon (MPT) complex. The chain is Protein transport protein Sec61 subunit alpha (sec61a) from Boreogadus saida (Polar cod).